A 137-amino-acid polypeptide reads, in one-letter code: Bacteriohemerythrin (137 aa).

7 residues coordinate Fe cation: histidine 21, histidine 53, glutamate 57, histidine 72, histidine 76, histidine 112, and aspartate 117.

It belongs to the hemerythrin family. As to quaternary structure, monomer.

Functionally, oxygen-binding protein. May be involved in a storage mechanism or for delivery to oxygen-requiring enzymes. The oxygen-binding site contains two iron atoms. The protein is Bacteriohemerythrin of Ralstonia nicotianae (strain ATCC BAA-1114 / GMI1000) (Ralstonia solanacearum).